We begin with the raw amino-acid sequence, 496 residues long: Cytosol aminopeptidase (496 aa).

The Mn(2+) site is built by K258 and D263. K270 is an active-site residue. Positions 281, 340, and 342 each coordinate Mn(2+). Residue R344 is part of the active site.

This sequence belongs to the peptidase M17 family. Requires Mn(2+) as cofactor.

Its subcellular location is the cytoplasm. The catalysed reaction is Release of an N-terminal amino acid, Xaa-|-Yaa-, in which Xaa is preferably Leu, but may be other amino acids including Pro although not Arg or Lys, and Yaa may be Pro. Amino acid amides and methyl esters are also readily hydrolyzed, but rates on arylamides are exceedingly low.. It carries out the reaction Release of an N-terminal amino acid, preferentially leucine, but not glutamic or aspartic acids.. Its function is as follows. Presumably involved in the processing and regular turnover of intracellular proteins. Catalyzes the removal of unsubstituted N-terminal amino acids from various peptides. In Helicobacter pylori (strain ATCC 700392 / 26695) (Campylobacter pylori), this protein is Cytosol aminopeptidase (pepA).